Consider the following 376-residue polypeptide: Putative dihydroorotase (376 aa).

The Zn(2+) site is built by His35 and His37. Residues 37-39 (HVR) and Asn66 each bind substrate. Residues Asp114, His138, and His187 each contribute to the Zn(2+) site. Asn230 contributes to the substrate binding site. Residue Asp257 coordinates Zn(2+). The active site involves Asp257. Substrate contacts are provided by residues His261 and 273–274 (YG).

Belongs to the metallo-dependent hydrolases superfamily. DHOase family. Class I DHOase subfamily. Requires Zn(2+) as cofactor.

The catalysed reaction is (S)-dihydroorotate + H2O = N-carbamoyl-L-aspartate + H(+). The protein operates within pyrimidine metabolism; UMP biosynthesis via de novo pathway; (S)-dihydroorotate from bicarbonate: step 3/3. Catalyzes the reversible cyclization of carbamoyl aspartate to dihydroorotate. In Thermotoga maritima (strain ATCC 43589 / DSM 3109 / JCM 10099 / NBRC 100826 / MSB8), this protein is Putative dihydroorotase (pyrC).